The following is a 1081-amino-acid chain: WD repeat-containing protein 64 (1081 aa).

14 WD repeats span residues 102–152, 153–198, 199–265, 266–314, 315–356, 357–400, 401–444, 445–488, 489–532, 533–631, 632–740, 741–803, 804–857, and 858–895; these read DPIA…ATQK, GLIT…GSSQ, ENYF…VLDS, KNFK…LEDN, LPVR…NIST, KPVG…TLSL, LQVF…TRMI, QDTK…ETGL, QVYQ…FGSG, QEMK…LIVE, RNFS…PQSS, KGSK…EGRL, LKDM…EKKF, and KQLLSWRAHSLEIIQVIYVEEKQVVLTASIDGSVRLWH. Positions 726–745 are enriched in low complexity; sequence CSSSQCESSKGPQSSKGSKQ. Positions 726–757 are disordered; it reads CSSSQCESSKGPQSSKGSKQSIHDSEVKGEQT. The span at 746 to 756 shows a compositional bias: basic and acidic residues; it reads SIHDSEVKGEQ. A disordered region spans residues 1036–1060; that stretch reads DSSDGITGKKKGGHVQREKAPRRRS. Basic residues predominate over residues 1043-1060; sequence GKKKGGHVQREKAPRRRS.

In Homo sapiens (Human), this protein is WD repeat-containing protein 64 (WDR64).